A 375-amino-acid chain; its full sequence is Putative prophage phiRv2 integrase (375 aa).

The Core-binding (CB) domain occupies 75–153 (APFGEYAEGW…LLRAIMQTAL (79 aa)). The Tyr recombinase domain occupies 175–364 (HKIRPATLDE…AKGRDREIAA (190 aa)). Catalysis depends on residues Arg-209, His-316, Arg-319, and His-342. Tyr-351 (O-(3'-phospho-DNA)-tyrosine intermediate) is an active-site residue.

The protein belongs to the 'phage' integrase family.

In terms of biological role, integrase is necessary for integration of the phage into the host genome by site-specific recombination. In conjunction with excisionase, integrase is also necessary for excision of the prophage from the host genome. The polypeptide is Putative prophage phiRv2 integrase (Mycobacterium tuberculosis (strain CDC 1551 / Oshkosh)).